Consider the following 474-residue polypeptide: Tubulin gamma-1 chain (474 aa).

Ala142–Gly148 provides a ligand contact to GTP.

This sequence belongs to the tubulin family. In terms of assembly, gamma-tubulin complex is composed of gamma-tubulin and GCP proteins.

The protein localises to the cytoplasm. Its subcellular location is the cytoskeleton. It localises to the microtubule organizing center. The protein resides in the nucleus. It is found in the cell cortex. In terms of biological role, tubulin is the major constituent of microtubules. The gamma chain is found at microtubule organizing centers (MTOC) such as the spindle poles, suggesting that it is involved in the minus-end nucleation of microtubule assembly. Its function is as follows. Gamma-tubulin complex is essential for the control of microtubular network remodeling in the course of initiation and development of giant-feeding cells, and for the successful reproduction of nematodes (e.g. Meloidogyne spp.) in their plant hosts. This Arabidopsis thaliana (Mouse-ear cress) protein is Tubulin gamma-1 chain (TUBG1).